Consider the following 263-residue polypeptide: Ribosomal RNA small subunit methyltransferase A (263 aa).

Positions 20, 22, 47, 68, 90, and 110 each coordinate S-adenosyl-L-methionine.

Belongs to the class I-like SAM-binding methyltransferase superfamily. rRNA adenine N(6)-methyltransferase family. RsmA subfamily.

Its subcellular location is the cytoplasm. The catalysed reaction is adenosine(1518)/adenosine(1519) in 16S rRNA + 4 S-adenosyl-L-methionine = N(6)-dimethyladenosine(1518)/N(6)-dimethyladenosine(1519) in 16S rRNA + 4 S-adenosyl-L-homocysteine + 4 H(+). Its function is as follows. Specifically dimethylates two adjacent adenosines (A1518 and A1519) in the loop of a conserved hairpin near the 3'-end of 16S rRNA in the 30S particle. May play a critical role in biogenesis of 30S subunits. The protein is Ribosomal RNA small subunit methyltransferase A of Chlorobium limicola (strain DSM 245 / NBRC 103803 / 6330).